The sequence spans 77 residues: Translation initiation factor IF-1, chloroplastic (77 aa).

An S1-like domain is found at Met-1 to Arg-71.

Belongs to the IF-1 family. In terms of assembly, component of the 30S ribosomal translation pre-initiation complex which assembles on the 30S ribosome in the order IF-2 and IF-3, IF-1 and N-formylmethionyl-tRNA(fMet); mRNA recruitment can occur at any time during PIC assembly.

It localises to the plastid. The protein localises to the chloroplast. One of the essential components for the initiation of protein synthesis. Stabilizes the binding of IF-2 and IF-3 on the 30S subunit to which N-formylmethionyl-tRNA(fMet) subsequently binds. Helps modulate mRNA selection, yielding the 30S pre-initiation complex (PIC). Upon addition of the 50S ribosomal subunit IF-1, IF-2 and IF-3 are released leaving the mature 70S translation initiation complex. This is Translation initiation factor IF-1, chloroplastic from Lactuca sativa (Garden lettuce).